Reading from the N-terminus, the 241-residue chain is SURF1-like protein (241 aa).

2 consecutive transmembrane segments (helical) span residues 5–25 (LTVLITFIILVLLGFWQLNRL) and 199–219 (LEYAFTWFGLAASLVVIYRIY).

This sequence belongs to the SURF1 family.

The protein resides in the cell membrane. The sequence is that of SURF1-like protein from Rickettsia bellii (strain RML369-C).